The sequence spans 961 residues: Ras-interacting protein 1 (961 aa).

The segment covering 1–10 has biased composition (basic and acidic residues); the sequence is MLSGERKEGG. Disordered stretches follow at residues 1–21, 35–70, and 96–116; these read MLSG…HLPV, LGRR…PHVE, and RGSG…QRWA. Residues 41 to 57 show a composition bias toward low complexity; that stretch reads SAASVKSSSSDTGSRSS. Positions 59–68 are enriched in pro residues; it reads PLPPPPPPPH. At arginine 96 the chain carries Omega-N-methylarginine. Over residues 98-110 the composition is skewed to gly residues; that stretch reads SGAGGAGGPGTPG. In terms of domain architecture, Ras-associating spans 141 to 253; that stretch reads PPGVLKIFAS…RRFELRGREE (113 aa). Positions 261-352 are disordered; it reads AFGAADADGT…MAPGAADAQM (92 aa). 2 positions are modified to phosphoserine: serine 274 and serine 286. Positions 284 to 295 are enriched in low complexity; that stretch reads AASGGAALASPG. Positions 296–307 are enriched in gly residues; it reads PGSGSGTPTGSG. Over residues 314–327 the composition is skewed to low complexity; it reads NLSLRRSVSELSLQ. Residues serine 320, serine 322, serine 325, and serine 413 each carry the phosphoserine modification. The region spanning 594-895 is the Dilute domain; sequence GRLARLIKEA…PPAERDAVDT (302 aa).

As to quaternary structure, interacts with Ras family members that have been activated by GTP binding. Interacts with HRAS, RAP1A, RAP2, RRAS, RAF1 and RRAS2. Interacts with MYH9 and ARHGAP29. As to expression, detected in kidney, heart, skeletal muscle, small intestine and lung.

The protein resides in the cytoplasm. It is found in the perinuclear region. It localises to the golgi apparatus. Its subcellular location is the golgi stack. Required for the proper formation of vascular structures that develop via both vasculogenesis and angiogenesis. Acts as a critical and vascular-specific regulator of GTPase signaling, cell architecture, and adhesion, which is essential for endothelial cell morphogenesis and blood vessel tubulogenesis. Regulates the activity of Rho GTPases in part by recruiting ARHGAP29 and suppressing RhoA signaling and dampening ROCK and MYH9 activities in endothelial cells. May act as effector for Golgi-bound HRAS and other Ras-like proteins. May promote HRAS-mediated transformation. Negative regulator of amino acid starvation-induced autophagy. The sequence is that of Ras-interacting protein 1 (Rasip1) from Mus musculus (Mouse).